A 483-amino-acid polypeptide reads, in one-letter code: Cysteine--tRNA ligase (483 aa).

Cysteine 28 contributes to the Zn(2+) binding site. Residues 30-40 carry the 'HIGH' region motif; that stretch reads MTVYDYCHLGH. Residues cysteine 212, histidine 237, and glutamate 241 each contribute to the Zn(2+) site. Residues 269–273 carry the 'KMSKS' region motif; the sequence is KMSKS. ATP is bound at residue lysine 272.

It belongs to the class-I aminoacyl-tRNA synthetase family. In terms of assembly, monomer. It depends on Zn(2+) as a cofactor.

The protein localises to the cytoplasm. The enzyme catalyses tRNA(Cys) + L-cysteine + ATP = L-cysteinyl-tRNA(Cys) + AMP + diphosphate. In Bordetella avium (strain 197N), this protein is Cysteine--tRNA ligase.